A 461-amino-acid polypeptide reads, in one-letter code: Bifunctional protein GlmU (461 aa).

The tract at residues 1–230 is pyrophosphorylase; that stretch reads MECLMAVILA…SSEILGINDR (230 aa). Residues 9 to 12, lysine 23, glutamine 73, 78 to 79, 101 to 103, glycine 140, glutamate 155, asparagine 170, and asparagine 228 contribute to the UDP-N-acetyl-alpha-D-glucosamine site; these read LAAG, GT, and YGD. Aspartate 103 is a binding site for Mg(2+). Position 228 (asparagine 228) interacts with Mg(2+). The segment at 231 to 251 is linker; it reads VQLAEAGRIIRSRILKRHMKN. An N-acetyltransferase region spans residues 252–461; that stretch reads GVTIIDPDST…KKGMLRQEKE (210 aa). UDP-N-acetyl-alpha-D-glucosamine is bound by residues arginine 333 and lysine 351. The Proton acceptor role is filled by histidine 363. The UDP-N-acetyl-alpha-D-glucosamine site is built by tyrosine 366 and asparagine 377. Acetyl-CoA contacts are provided by residues 386 to 387, alanine 423, and arginine 440; that span reads NY.

In the N-terminal section; belongs to the N-acetylglucosamine-1-phosphate uridyltransferase family. It in the C-terminal section; belongs to the transferase hexapeptide repeat family. Homotrimer. Requires Mg(2+) as cofactor.

The protein resides in the cytoplasm. The enzyme catalyses alpha-D-glucosamine 1-phosphate + acetyl-CoA = N-acetyl-alpha-D-glucosamine 1-phosphate + CoA + H(+). It catalyses the reaction N-acetyl-alpha-D-glucosamine 1-phosphate + UTP + H(+) = UDP-N-acetyl-alpha-D-glucosamine + diphosphate. It functions in the pathway nucleotide-sugar biosynthesis; UDP-N-acetyl-alpha-D-glucosamine biosynthesis; N-acetyl-alpha-D-glucosamine 1-phosphate from alpha-D-glucosamine 6-phosphate (route II): step 2/2. The protein operates within nucleotide-sugar biosynthesis; UDP-N-acetyl-alpha-D-glucosamine biosynthesis; UDP-N-acetyl-alpha-D-glucosamine from N-acetyl-alpha-D-glucosamine 1-phosphate: step 1/1. It participates in bacterial outer membrane biogenesis; LPS lipid A biosynthesis. Catalyzes the last two sequential reactions in the de novo biosynthetic pathway for UDP-N-acetylglucosamine (UDP-GlcNAc). The C-terminal domain catalyzes the transfer of acetyl group from acetyl coenzyme A to glucosamine-1-phosphate (GlcN-1-P) to produce N-acetylglucosamine-1-phosphate (GlcNAc-1-P), which is converted into UDP-GlcNAc by the transfer of uridine 5-monophosphate (from uridine 5-triphosphate), a reaction catalyzed by the N-terminal domain. This is Bifunctional protein GlmU from Acetivibrio thermocellus (strain ATCC 27405 / DSM 1237 / JCM 9322 / NBRC 103400 / NCIMB 10682 / NRRL B-4536 / VPI 7372) (Clostridium thermocellum).